Reading from the N-terminus, the 66-residue chain is Gas vesicle protein A (66 aa).

This sequence belongs to the gas vesicle GvpA family. The gas vesicle shell is 2 nm thick and consists of a single layer of this protein. It forms helical ribs nearly perpendicular to the long axis of the vesicle.

Its subcellular location is the gas vesicle shell. Functionally, gas vesicles are hollow, gas filled proteinaceous nanostructures found in some microorganisms. During planktonic growth they allow positioning of the organism at a favorable depth for light or nutrient acquisition. GvpA forms the protein shell. This Thiocapsa pendens (Amoebobacter pendens) protein is Gas vesicle protein A.